Consider the following 168-residue polypeptide: Small ribosomal subunit protein uS9 (168 aa).

Over residues 1–29 (MAQNEELTAEAVEAEETLTSYTSESTSAE) the composition is skewed to low complexity. Positions 1–36 (MAQNEELTAEAVEAEETLTSYTSESTSAEDAPKKER) are disordered.

Belongs to the universal ribosomal protein uS9 family.

The sequence is that of Small ribosomal subunit protein uS9 from Paenarthrobacter aurescens (strain TC1).